Consider the following 209-residue polypeptide: Cytidylate kinase (209 aa).

7-15 contacts ATP; it reads GPAASGKGT.

Belongs to the cytidylate kinase family. Type 1 subfamily.

The protein resides in the cytoplasm. It catalyses the reaction CMP + ATP = CDP + ADP. The enzyme catalyses dCMP + ATP = dCDP + ADP. The protein is Cytidylate kinase of Afipia carboxidovorans (strain ATCC 49405 / DSM 1227 / KCTC 32145 / OM5) (Oligotropha carboxidovorans).